The following is a 334-amino-acid chain: Ribosomal RNA small subunit methyltransferase H (334 aa).

The interval 1–21 (MNALPIRTAAPSGHSGGHSST) is disordered. S-adenosyl-L-methionine-binding positions include 52-54 (GGY), Asp71, Phe98, Asp119, and Gln126.

The protein belongs to the methyltransferase superfamily. RsmH family.

It localises to the cytoplasm. It catalyses the reaction cytidine(1402) in 16S rRNA + S-adenosyl-L-methionine = N(4)-methylcytidine(1402) in 16S rRNA + S-adenosyl-L-homocysteine + H(+). Its function is as follows. Specifically methylates the N4 position of cytidine in position 1402 (C1402) of 16S rRNA. This chain is Ribosomal RNA small subunit methyltransferase H, found in Granulibacter bethesdensis (strain ATCC BAA-1260 / CGDNIH1).